A 97-amino-acid chain; its full sequence is Small ribosomal subunit protein bS20 (97 aa).

Belongs to the bacterial ribosomal protein bS20 family.

Binds directly to 16S ribosomal RNA. This is Small ribosomal subunit protein bS20 from Prochlorococcus marinus (strain MIT 9301).